The sequence spans 127 residues: Large ribosomal subunit protein bL19 (127 aa).

Belongs to the bacterial ribosomal protein bL19 family.

This protein is located at the 30S-50S ribosomal subunit interface and may play a role in the structure and function of the aminoacyl-tRNA binding site. In Roseobacter denitrificans (strain ATCC 33942 / OCh 114) (Erythrobacter sp. (strain OCh 114)), this protein is Large ribosomal subunit protein bL19.